Consider the following 186-residue polypeptide: Zein-alpha PZ19.1 (186 aa).

The N-terminal stretch at 1–21 (MAAKIFCLIMLLGLSASAATA) is a signal peptide.

Belongs to the zein family.

Functionally, zeins are major seed storage proteins. This Zea mays (Maize) protein is Zein-alpha PZ19.1.